We begin with the raw amino-acid sequence, 233 residues long: tRNA pseudouridine synthase B (233 aa).

Asp-48 acts as the Nucleophile in catalysis.

The protein belongs to the pseudouridine synthase TruB family. Type 1 subfamily.

It catalyses the reaction uridine(55) in tRNA = pseudouridine(55) in tRNA. In terms of biological role, responsible for synthesis of pseudouridine from uracil-55 in the psi GC loop of transfer RNAs. The sequence is that of tRNA pseudouridine synthase B from Bacteroides fragilis (strain ATCC 25285 / DSM 2151 / CCUG 4856 / JCM 11019 / LMG 10263 / NCTC 9343 / Onslow / VPI 2553 / EN-2).